The following is a 66-amino-acid chain: COP-associated protein (66 aa).

In terms of domain architecture, HMA spans 1–66 (MKIDIPVKGM…AILDAGYELG (66 aa)). C12 and C15 together coordinate Cu cation.

Part of a cation-transporting system which is associated with copper export out of the H.pylori cells. This chain is COP-associated protein (copP), found in Helicobacter felis (strain ATCC 49179 / CCUG 28539 / NCTC 12436 / CS1).